Here is a 145-residue protein sequence, read N- to C-terminus: Transcriptional regulator ZitR (145 aa).

The region spanning 1 to 142 (MSLANQIDQF…ISQFLSVLTE (142 aa)) is the HTH marR-type domain. E23, C29, E40, and H41 together coordinate Zn(2+). The segment at residues 53-76 (NARIAEQLKISPAAVTKALKKLQE) is a DNA-binding region (H-T-H motif). Residues E106, H107, and H111 each contribute to the Zn(2+) site.

As to quaternary structure, homodimer.

Zinc acts as a corepressor and is required for DNA-binding activity. Binds up to two zinc ligands per monomer. Inactive under zinc deprivation. Zinc-responsive regulator that represses expression of the zit operon in the presence of zinc. Acts by binding two palindromic operator sites overlapping the -35 and -10 boxes of the zit promoter. Could be a sensitive sensor of intracellular zinc to efficiently respond to zinc variations in the environment. This Lactococcus lactis subsp. cremoris (strain MG1363) protein is Transcriptional regulator ZitR (zitR).